A 283-amino-acid polypeptide reads, in one-letter code: MKQYLDLCQRIVEQGKWVENERTGKRCLTVINADLTYDVAKGEFPLVTTRKSFWKAAIAELLGYIRGYDNAADFRQLGTKSWDANANENAAWLTNPHRKGEDDMGLVYGAVGRNFPKVGGGSVDLLRQIVDDLKRGVDNRGEIYTFYHPGAFHMGCLRPCLHSHHFSLLDGTLYLNSTQRSADVPLGLNWNMIQCYTFLALMAQITGHQAGQAFHKIVNAHIYEDQLELMRDVQLKRTPFKAPTLKINPDIKSLEDLETWVTLADFEVEGYEYHPSIQYPFSV.

R22 lines the dUMP pocket. C160 (nucleophile) is an active-site residue. Residues 180–183 (RSAD), N191, and 221–223 (HIY) each bind dUMP. Residue D183 coordinates (6R)-5,10-methylene-5,6,7,8-tetrahydrofolate. (6R)-5,10-methylene-5,6,7,8-tetrahydrofolate is bound at residue S282.

It belongs to the thymidylate synthase family. Bacterial-type ThyA subfamily. In terms of assembly, homodimer.

The protein resides in the cytoplasm. It carries out the reaction dUMP + (6R)-5,10-methylene-5,6,7,8-tetrahydrofolate = 7,8-dihydrofolate + dTMP. It functions in the pathway pyrimidine metabolism; dTTP biosynthesis. Catalyzes the reductive methylation of 2'-deoxyuridine-5'-monophosphate (dUMP) to 2'-deoxythymidine-5'-monophosphate (dTMP) while utilizing 5,10-methylenetetrahydrofolate (mTHF) as the methyl donor and reductant in the reaction, yielding dihydrofolate (DHF) as a by-product. This enzymatic reaction provides an intracellular de novo source of dTMP, an essential precursor for DNA biosynthesis. The protein is Thymidylate synthase of Glaesserella parasuis serovar 5 (strain SH0165) (Haemophilus parasuis).